Reading from the N-terminus, the 326-residue chain is 4-hydroxythreonine-4-phosphate dehydrogenase (326 aa).

Residues His-133 and Thr-134 each contribute to the substrate site. Residues His-163, His-208, and His-263 each contribute to the a divalent metal cation site. 3 residues coordinate substrate: Lys-271, Asn-280, and Arg-289.

It belongs to the PdxA family. As to quaternary structure, homodimer. The cofactor is Zn(2+). Mg(2+) is required as a cofactor. Requires Co(2+) as cofactor.

It localises to the cytoplasm. The catalysed reaction is 4-(phosphooxy)-L-threonine + NAD(+) = 3-amino-2-oxopropyl phosphate + CO2 + NADH. Its pathway is cofactor biosynthesis; pyridoxine 5'-phosphate biosynthesis; pyridoxine 5'-phosphate from D-erythrose 4-phosphate: step 4/5. Its function is as follows. Catalyzes the NAD(P)-dependent oxidation of 4-(phosphooxy)-L-threonine (HTP) into 2-amino-3-oxo-4-(phosphooxy)butyric acid which spontaneously decarboxylates to form 3-amino-2-oxopropyl phosphate (AHAP). The sequence is that of 4-hydroxythreonine-4-phosphate dehydrogenase from Pseudoalteromonas atlantica (strain T6c / ATCC BAA-1087).